The following is a 374-amino-acid chain: tRNA-specific 2-thiouridylase MnmA (374 aa).

Residues 15–22 (GMSGGVDS) and Met-41 contribute to the ATP site. The interaction with target base in tRNA stretch occupies residues 101-103 (NPD). Cys-106 serves as the catalytic Nucleophile. Cysteines 106 and 203 form a disulfide. ATP is bound at residue Gly-130. An interaction with tRNA region spans residues 153 to 155 (KDQ). Cys-203 (cysteine persulfide intermediate) is an active-site residue. Residues 311 to 312 (RY) form an interaction with tRNA region.

It belongs to the MnmA/TRMU family.

It localises to the cytoplasm. It carries out the reaction S-sulfanyl-L-cysteinyl-[protein] + uridine(34) in tRNA + AH2 + ATP = 2-thiouridine(34) in tRNA + L-cysteinyl-[protein] + A + AMP + diphosphate + H(+). Its function is as follows. Catalyzes the 2-thiolation of uridine at the wobble position (U34) of tRNA, leading to the formation of s(2)U34. The polypeptide is tRNA-specific 2-thiouridylase MnmA (Lysinibacillus sphaericus (strain C3-41)).